A 135-amino-acid chain; its full sequence is Large ribosomal subunit protein uL16c (135 aa).

This sequence belongs to the universal ribosomal protein uL16 family. As to quaternary structure, part of the 50S ribosomal subunit.

It localises to the plastid. The protein resides in the chloroplast. The protein is Large ribosomal subunit protein uL16c of Populus alba (White poplar).